The primary structure comprises 92 residues: UPF0223 protein SMU_1141c (92 aa).

The protein belongs to the UPF0223 family.

The chain is UPF0223 protein SMU_1141c from Streptococcus mutans serotype c (strain ATCC 700610 / UA159).